Consider the following 175-residue polypeptide: ATP synthase subunit delta (175 aa).

This sequence belongs to the ATPase delta chain family. In terms of assembly, F-type ATPases have 2 components, F(1) - the catalytic core - and F(0) - the membrane proton channel. F(1) has five subunits: alpha(3), beta(3), gamma(1), delta(1), epsilon(1). F(0) has three main subunits: a(1), b(2) and c(10-14). The alpha and beta chains form an alternating ring which encloses part of the gamma chain. F(1) is attached to F(0) by a central stalk formed by the gamma and epsilon chains, while a peripheral stalk is formed by the delta and b chains.

Its subcellular location is the cell inner membrane. In terms of biological role, f(1)F(0) ATP synthase produces ATP from ADP in the presence of a proton or sodium gradient. F-type ATPases consist of two structural domains, F(1) containing the extramembraneous catalytic core and F(0) containing the membrane proton channel, linked together by a central stalk and a peripheral stalk. During catalysis, ATP synthesis in the catalytic domain of F(1) is coupled via a rotary mechanism of the central stalk subunits to proton translocation. Its function is as follows. This protein is part of the stalk that links CF(0) to CF(1). It either transmits conformational changes from CF(0) to CF(1) or is implicated in proton conduction. The polypeptide is ATP synthase subunit delta (Sulfurovum sp. (strain NBC37-1)).